The chain runs to 253 residues: Major prion protein (253 aa).

An N-terminal signal peptide occupies residues 1 to 22; the sequence is MANLGCWMLVLFVATWSDLGLC. The interaction with GRB2, ERI3 and SYN1 stretch occupies residues 23 to 230; sequence KKRPKPGGWN…ESQAYYQRGS (208 aa). The interval 26–108 is disordered; that stretch reads PKPGGWNTGG…WNKPSKPKTS (83 aa). Repeat copies occupy residues 51 to 59, 60 to 67, 68 to 75, 76 to 83, and 84 to 91. Residues 51 to 91 form a 5 X 8 AA tandem repeats of P-H-G-G-G-W-G-Q region; sequence PQGGGGWGQPHGGGWGQPHGGGWGQPHGGGWGQPHGGGWGQ. The span at 52–95 shows a compositional bias: gly residues; the sequence is QGGGGWGQPHGGGWGQPHGGGWGQPHGGGWGQPHGGGWGQGGGT. Cu(2+) contacts are provided by His61, Gly62, Gly63, His69, Gly70, Gly71, His77, Gly78, Gly79, His85, Gly86, and Gly87. Cys179 and Cys214 form a disulfide bridge. N-linked (GlcNAc...) asparagine glycosylation is found at Asn181 and Asn197. The GPI-anchor amidated serine moiety is linked to residue Ser230. A propeptide spans 231-253 (removed in mature form); that stretch reads SMVFFSSPPVILLISFLIFLIVG.

Belongs to the prion family. Monomer and homodimer. Has a tendency to aggregate into amyloid fibrils containing a cross-beta spine, formed by a steric zipper of superposed beta-strands. Soluble oligomers may represent an intermediate stage on the path to fibril formation. Copper binding may promote oligomerization. Interacts with GRB2, APP, ERI3/PRNPIP and SYN1. Mislocalized cytosolically exposed PrP interacts with MGRN1; this interaction alters MGRN1 subcellular location and causes lysosomal enlargement. Interacts with KIAA1191.

Its subcellular location is the cell membrane. The protein localises to the golgi apparatus. Its primary physiological function is unclear. Has cytoprotective activity against internal or environmental stresses. May play a role in neuronal development and synaptic plasticity. May be required for neuronal myelin sheath maintenance. May play a role in iron uptake and iron homeostasis. Soluble oligomers are toxic to cultured neuroblastoma cells and induce apoptosis (in vitro). Association with GPC1 (via its heparan sulfate chains) targets PRNP to lipid rafts. Also provides Cu(2+) or Zn(2+) for the ascorbate-mediated GPC1 deaminase degradation of its heparan sulfate side chains. The chain is Major prion protein (PRNP) from Trachypithecus francoisi (Francois' leaf monkey).